A 472-amino-acid polypeptide reads, in one-letter code: Putative diacyglycerol O-acyltransferase MT3172 (472 aa).

The Proton acceptor role is filled by His139. The disordered stretch occupies residues 217–238 (DRRVPPTFDRSAPPGPFQRGLS).

It belongs to the long-chain O-acyltransferase family.

The catalysed reaction is an acyl-CoA + a 1,2-diacyl-sn-glycerol = a triacyl-sn-glycerol + CoA. It participates in glycerolipid metabolism; triacylglycerol biosynthesis. This Mycobacterium tuberculosis (strain CDC 1551 / Oshkosh) protein is Putative diacyglycerol O-acyltransferase MT3172.